The sequence spans 149 residues: Hordoindoline-A (149 aa).

A signal peptide spans 1–19; sequence MKALFLMGLLALVASAAFA. Positions 20-28 are excised as a propeptide; the sequence is QYGEVVGSY. Positions 148–149 are cleaved as a propeptide — removed in mature form; the sequence is YW.

Post-translationally, five disulfide bonds are present. As to expression, found in endosperm and aleurone layer of developing kernels, but not in the embryo.

It localises to the membrane. Its subcellular location is the secreted. The protein localises to the extracellular space. Its function is as follows. Acts as a membranotoxin, probably through its antibacterial and antifungal activities, contributing to the defense mechanism of the plant against predators. Forms monovalent cation-selective ion channels in membranes. Contributes to grain texture and hardness. The protein is Hordoindoline-A (HINA) of Hordeum vulgare (Barley).